The following is a 247-amino-acid chain: MRLKCTISYDGHLFNGYQVQPGKRTVQDELEKALAVLHKSKDRIPVVSSGRTDSGVHAAGQVIHFDTPLSIPAERWPYALNALLPDDIAVKQAEIADDGFHARFSAVKKEYRYFVYTEKHPDVFKRHYAYHFSYRLNVQDMREAAKHLIGTHDFTSFCAAKTEVQDKVRTIYELDWTETADGLQMRITGSGFLYNMVRIIAGTLLDAGIGKISPDEVKSMLEAKDREAAGRTAPGHGLYLWNVYYDN.

D53 serves as the catalytic Nucleophile. Y111 is a binding site for substrate.

The protein belongs to the tRNA pseudouridine synthase TruA family. In terms of assembly, homodimer.

The catalysed reaction is uridine(38/39/40) in tRNA = pseudouridine(38/39/40) in tRNA. Functionally, formation of pseudouridine at positions 38, 39 and 40 in the anticodon stem and loop of transfer RNAs. The chain is tRNA pseudouridine synthase A from Bacillus subtilis (strain 168).